The chain runs to 149 residues: Large ribosomal subunit protein uL13 (149 aa).

The protein belongs to the universal ribosomal protein uL13 family. Part of the 50S ribosomal subunit.

Its function is as follows. This protein is one of the early assembly proteins of the 50S ribosomal subunit, although it is not seen to bind rRNA by itself. It is important during the early stages of 50S assembly. This Chlamydia pneumoniae (Chlamydophila pneumoniae) protein is Large ribosomal subunit protein uL13.